The primary structure comprises 967 residues: A disintegrin and metalloproteinase with thrombospondin motifs 1 (967 aa).

Disordered regions lie at residues 1-27 (MQRA…APGS) and 192-250 (GDVG…SIRK). The N-terminal stretch at 1–49 (MQRAVPEGFGRRKLGSDMGNAERAPGSRSFGPVPTLLLLAAALLAVSDA) is a signal peptide. Positions 50-252 (LGRPSEEDEE…TGTGSIRKKR (203 aa)) are excised as a propeptide. The Cysteine switch motif lies at 196-203 (GTCGVVDD). Position 198 (Cys-198) interacts with Zn(2+). Residues 203–212 (DEPRPTGKAE) are compositionally biased toward basic and acidic residues. Over residues 213–226 (TEDEDEGTEGEDEG) the composition is skewed to acidic residues. Positions 258 to 467 (RYVETMLVAD…GHGECLMDKP (210 aa)) constitute a Peptidase M12B domain. Residues Glu-261, Asp-344, and Asp-351 each contribute to the Ca(2+) site. Cystine bridges form between Cys-333-Cys-385, Cys-362-Cys-367, Cys-379-Cys-462, and Cys-417-Cys-446. His-401 lines the Zn(2+) pocket. Glu-402 is a catalytic residue. The Zn(2+) site is built by His-405 and His-411. Residues Cys-462 and Asp-465 each coordinate Ca(2+). The 84-residue stretch at 476–559 (DLPGTSYDAN…DRKHFDTPFH (84 aa)) folds into the Disintegrin domain. Cystine bridges form between Cys-488–Cys-511, Cys-499–Cys-521, Cys-506–Cys-540, and Cys-534–Cys-545. Asn-547 is a glycosylation site (N-linked (GlcNAc...) asparagine). Positions 559–614 (HGSWGMWGPWGDCSRTCGGGVQYTMRECDNPVPKNGGKYCEGKRVRYRSCNLEDCP) constitute a TSP type-1 1 domain. 3 disulfide bridges follow: Cys-571–Cys-608, Cys-575–Cys-613, and Cys-586–Cys-598. 2 N-linked (GlcNAc...) asparagine glycosylation sites follow: Asn-720 and Asn-764. Residues 725 to 849 (KKISGSVTSA…YFVKKKKESF (125 aa)) are spacer. 2 TSP type-1 domains span residues 854–905 (TFSA…RPCA) and 908–967 (PCPQ…AECS).

The cofactor is Zn(2+). The precursor is cleaved by a furin endopeptidase. Post-translationally, glycosylated. Can be O-fucosylated by POFUT2 on a serine or a threonine residue found within the consensus sequence C1-X(2)-(S/T)-C2-G of the TSP type-1 repeat domains where C1 and C2 are the first and second cysteine residue of the repeat, respectively. Fucosylated repeats can then be further glycosylated by the addition of a beta-1,3-glucose residue by the glucosyltransferase, B3GALTL. Fucosylation mediates the efficient secretion of ADAMTS family members. Can also be C-glycosylated with one or two mannose molecules on tryptophan residues within the consensus sequence W-X-X-W of the TPRs, and N-glycosylated. These other glycosylations can also facilitate secretion.

Its subcellular location is the secreted. It is found in the extracellular space. The protein localises to the extracellular matrix. Metalloprotease which cleaves aggrecan, a cartilage proteoglycan, at the '1938-Glu-|-Leu-1939' site (within the chondroitin sulfate attachment domain), and may be involved in its turnover. Also cleaves COMP. Has angiogenic inhibitor activity. May play a critical role in follicular rupture. The sequence is that of A disintegrin and metalloproteinase with thrombospondin motifs 1 (ADAMTS1) from Homo sapiens (Human).